A 422-amino-acid polypeptide reads, in one-letter code: Tyrosine--tRNA ligase (422 aa).

L-tyrosine is bound at residue Y35. The 'HIGH' region signature appears at 40-49 (PTADSLHIGH). Y170 and Q174 together coordinate L-tyrosine. The short motif at 232–236 (KFGKT) is the 'KMSKS' region element. K235 contributes to the ATP binding site. An S4 RNA-binding domain is found at 355–421 (LTLVDLLVES…GKKKYFLVTY (67 aa)).

The protein belongs to the class-I aminoacyl-tRNA synthetase family. TyrS type 1 subfamily. Homodimer.

It localises to the cytoplasm. It carries out the reaction tRNA(Tyr) + L-tyrosine + ATP = L-tyrosyl-tRNA(Tyr) + AMP + diphosphate + H(+). Catalyzes the attachment of tyrosine to tRNA(Tyr) in a two-step reaction: tyrosine is first activated by ATP to form Tyr-AMP and then transferred to the acceptor end of tRNA(Tyr). This is Tyrosine--tRNA ligase from Bacillus pumilus (strain SAFR-032).